The chain runs to 373 residues: Methionine import ATP-binding protein MetN 1 (373 aa).

Residues 29 to 270 enclose the ABC transporter domain; sequence ILIDRVRKVY…PRHEVTRRFV (242 aa). 67-74 serves as a coordination point for ATP; that stretch reads GRSGAGKS.

The protein belongs to the ABC transporter superfamily. Methionine importer (TC 3.A.1.24) family. As to quaternary structure, the complex is composed of two ATP-binding proteins (MetN), two transmembrane proteins (MetI) and a solute-binding protein (MetQ).

The protein localises to the cell inner membrane. It carries out the reaction L-methionine(out) + ATP + H2O = L-methionine(in) + ADP + phosphate + H(+). The enzyme catalyses D-methionine(out) + ATP + H2O = D-methionine(in) + ADP + phosphate + H(+). Part of the ABC transporter complex MetNIQ involved in methionine import. Responsible for energy coupling to the transport system. This chain is Methionine import ATP-binding protein MetN 1, found in Rhodopseudomonas palustris (strain ATCC BAA-98 / CGA009).